The chain runs to 398 residues: Lysophospholipid acyltransferase LPEAT1 (398 aa).

The interval 1-24 (MESELKDLNSNSNPPSSKEDRPLL) is disordered. Residue S28 is modified to Phosphoserine. A helical transmembrane segment spans residues 66 to 86 (LAVALVTLVPLRFLLSMSILL). Residues 158–185 (RDSDMDSNPKTTSTEINQKGEAATEEPE) form a disordered region. Polar residues predominate over residues 163 to 174 (DSNPKTTSTEIN). An HXXXXD motif motif is present at residues 194–199 (HVSYLD).

It belongs to the 1-acyl-sn-glycerol-3-phosphate acyltransferase family.

Its subcellular location is the endoplasmic reticulum membrane. The enzyme catalyses a 1-acyl-sn-glycero-3-phosphoethanolamine + an acyl-CoA = a 1,2-diacyl-sn-glycero-3-phosphoethanolamine + CoA. The catalysed reaction is a 1-acyl-sn-glycero-3-phosphate + an acyl-CoA = a 1,2-diacyl-sn-glycero-3-phosphate + CoA. It carries out the reaction a 1-acyl-sn-glycero-3-phosphocholine + an acyl-CoA = a 1,2-diacyl-sn-glycero-3-phosphocholine + CoA. It catalyses the reaction a 1-acyl-sn-glycero-3-phospho-L-serine + an acyl-CoA = a 1,2-diacyl-sn-glycero-3-phospho-L-serine + CoA. Its pathway is lipid metabolism; phospholipid metabolism. Its function is as follows. Possesses acyl-CoA-dependent lysophospholipid acyltransferase activity with a subset of lysophospholipids as substrates. Exhibits strong acylation activity on lysophosphatidylethanolamine (LPE) and lysophosphatidate (LPA), and lower activity on lysophosphatidylcholine (LPC) and lysophosphatidylserine (LPS). Exhibits acylation activity on both LPE and LPC. Has a preference for 18:1-LPE over 16:0-LPE as acceptor. Palmitoyl-CoA (16:0-CoA) is a better acyl donor than oleoyl-CoA (18:1-CoA). Among several different acyl-CoA species the best acyl donor is palmitoyl-CoA (16:0-CoA). Activity is calcium-independent. Its activity is essential for maintaining adequate levels of phosphatidylethanolamine (PE), LPE and LPC in the cells, which is crucial for plant growth regulation. This chain is Lysophospholipid acyltransferase LPEAT1, found in Arabidopsis thaliana (Mouse-ear cress).